The chain runs to 199 residues: Shikimate kinase (199 aa).

14–19 (GSGKST) is an ATP binding site. Serine 18 provides a ligand contact to Mg(2+). 3 residues coordinate substrate: aspartate 36, arginine 60, and glycine 82. Position 120 (arginine 120) interacts with ATP. Arginine 147 provides a ligand contact to substrate.

It belongs to the shikimate kinase family. As to quaternary structure, monomer. The cofactor is Mg(2+).

The protein localises to the cytoplasm. The catalysed reaction is shikimate + ATP = 3-phosphoshikimate + ADP + H(+). It functions in the pathway metabolic intermediate biosynthesis; chorismate biosynthesis; chorismate from D-erythrose 4-phosphate and phosphoenolpyruvate: step 5/7. Functionally, catalyzes the specific phosphorylation of the 3-hydroxyl group of shikimic acid using ATP as a cosubstrate. In Chlorobium limicola (strain DSM 245 / NBRC 103803 / 6330), this protein is Shikimate kinase.